The sequence spans 490 residues: UDP-glycosyltransferase 86A1 (490 aa).

UDP-alpha-D-glucose contacts are provided by residues Ser294, 352–354 (CCQ), 369–377 (HCGWNSILE), and 391–394 (LTDQ).

The protein belongs to the UDP-glycosyltransferase family.

This chain is UDP-glycosyltransferase 86A1 (UGT86A1), found in Arabidopsis thaliana (Mouse-ear cress).